The chain runs to 221 residues: Eukaryotic translation initiation factor 3 subunit K (221 aa).

A PCI domain is found at 46-207 (YDLEANLACL…NIKTKHITEK (162 aa)).

It belongs to the eIF-3 subunit K family. As to quaternary structure, component of the eukaryotic translation initiation factor 3 (eIF-3) complex.

The protein resides in the cytoplasm. In terms of biological role, component of the eukaryotic translation initiation factor 3 (eIF-3) complex, which is involved in protein synthesis of a specialized repertoire of mRNAs and, together with other initiation factors, stimulates binding of mRNA and methionyl-tRNAi to the 40S ribosome. The eIF-3 complex specifically targets and initiates translation of a subset of mRNAs involved in cell proliferation. In Culex quinquefasciatus (Southern house mosquito), this protein is Eukaryotic translation initiation factor 3 subunit K.